We begin with the raw amino-acid sequence, 319 residues long: Phospho-N-acetylmuramoyl-pentapeptide-transferase (319 aa).

10 helical membrane-spanning segments follow: residues 5 to 25, 51 to 71, 79 to 99, 116 to 136, 149 to 169, 172 to 192, 197 to 217, 224 to 244, 252 to 272, and 299 to 319; these read LIPF…FIGF, TMGG…VLIW, AWIL…DDGI, LGQI…HFAF, SFLF…AVNL, GLDG…AWIA, NWVI…FFIF, IFMG…VSIF, LLIG…VISF, and VDIV…IIWG.

The protein belongs to the glycosyltransferase 4 family. MraY subfamily. It depends on Mg(2+) as a cofactor.

Its subcellular location is the cell membrane. The catalysed reaction is UDP-N-acetyl-alpha-D-muramoyl-L-alanyl-gamma-D-glutamyl-L-lysyl-D-alanyl-D-alanine + di-trans,octa-cis-undecaprenyl phosphate = Mur2Ac(oyl-L-Ala-gamma-D-Glu-L-Lys-D-Ala-D-Ala)-di-trans,octa-cis-undecaprenyl diphosphate + UMP. The protein operates within cell wall biogenesis; peptidoglycan biosynthesis. Its function is as follows. Catalyzes the initial step of the lipid cycle reactions in the biosynthesis of the cell wall peptidoglycan: transfers peptidoglycan precursor phospho-MurNAc-pentapeptide from UDP-MurNAc-pentapeptide onto the lipid carrier undecaprenyl phosphate, yielding undecaprenyl-pyrophosphoryl-MurNAc-pentapeptide, known as lipid I. The sequence is that of Phospho-N-acetylmuramoyl-pentapeptide-transferase from Lactobacillus johnsonii (strain CNCM I-12250 / La1 / NCC 533).